A 466-amino-acid chain; its full sequence is Glutamate decarboxylase beta (466 aa).

2 residues coordinate substrate: threonine 62 and asparagine 83. Residues 126 to 127, threonine 212, and histidine 275 each bind pyridoxal 5'-phosphate; that span reads SS. At lysine 276 the chain carries N6-(pyridoxal phosphate)lysine. 3 positions are modified to N6-acetyllysine: lysine 446, lysine 453, and lysine 464.

It belongs to the group II decarboxylase family. In terms of assembly, homohexamer composed of three dimers. It depends on pyridoxal 5'-phosphate as a cofactor.

The enzyme catalyses L-glutamate + H(+) = 4-aminobutanoate + CO2. Converts glutamate to gamma-aminobutyrate (GABA), consuming one intracellular proton in the reaction. The gad system helps to maintain a near-neutral intracellular pH when cells are exposed to extremely acidic conditions. The ability to survive transit through the acidic conditions of the stomach is essential for successful colonization of the mammalian host by commensal and pathogenic bacteria. This Escherichia coli O6:H1 (strain CFT073 / ATCC 700928 / UPEC) protein is Glutamate decarboxylase beta (gadB).